A 366-amino-acid polypeptide reads, in one-letter code: Histidinol-phosphate aminotransferase 2 (366 aa).

The interval 1–21 (MQVKDQLSLLQPYKPGKSPEQ) is disordered. K222 is modified (N6-(pyridoxal phosphate)lysine).

This sequence belongs to the class-II pyridoxal-phosphate-dependent aminotransferase family. Histidinol-phosphate aminotransferase subfamily. As to quaternary structure, homodimer. Pyridoxal 5'-phosphate is required as a cofactor.

It carries out the reaction L-histidinol phosphate + 2-oxoglutarate = 3-(imidazol-4-yl)-2-oxopropyl phosphate + L-glutamate. It participates in amino-acid biosynthesis; L-histidine biosynthesis; L-histidine from 5-phospho-alpha-D-ribose 1-diphosphate: step 7/9. The sequence is that of Histidinol-phosphate aminotransferase 2 from Bacillus cereus (strain ZK / E33L).